Here is a 330-residue protein sequence, read N- to C-terminus: CRISPR-associated endonuclease Cas1 (330 aa).

Residues glutamate 154, histidine 222, and glutamate 237 each contribute to the Mn(2+) site.

It belongs to the CRISPR-associated endonuclease Cas1 family. As to quaternary structure, homodimer, forms a heterotetramer with a Cas2 homodimer. It depends on Mg(2+) as a cofactor. Requires Mn(2+) as cofactor.

Functionally, CRISPR (clustered regularly interspaced short palindromic repeat), is an adaptive immune system that provides protection against mobile genetic elements (viruses, transposable elements and conjugative plasmids). CRISPR clusters contain spacers, sequences complementary to antecedent mobile elements, and target invading nucleic acids. CRISPR clusters are transcribed and processed into CRISPR RNA (crRNA). Acts as a dsDNA endonuclease. Involved in the integration of spacer DNA into the CRISPR cassette. This is CRISPR-associated endonuclease Cas1 from Clostridium perfringens (strain SM101 / Type A).